A 1400-amino-acid chain; its full sequence is DNA-directed RNA polymerase subunit beta' (1400 aa).

The Zn(2+) site is built by cysteine 71, cysteine 73, cysteine 86, and cysteine 89. Mg(2+)-binding residues include aspartate 462, aspartate 464, and aspartate 466. Residues cysteine 811, cysteine 885, cysteine 892, and cysteine 895 each contribute to the Zn(2+) site.

The protein belongs to the RNA polymerase beta' chain family. The RNAP catalytic core consists of 2 alpha, 1 beta, 1 beta' and 1 omega subunit. When a sigma factor is associated with the core the holoenzyme is formed, which can initiate transcription. Mg(2+) serves as cofactor. The cofactor is Zn(2+).

It catalyses the reaction RNA(n) + a ribonucleoside 5'-triphosphate = RNA(n+1) + diphosphate. DNA-dependent RNA polymerase catalyzes the transcription of DNA into RNA using the four ribonucleoside triphosphates as substrates. The polypeptide is DNA-directed RNA polymerase subunit beta' (Brucella ovis (strain ATCC 25840 / 63/290 / NCTC 10512)).